The following is a 625-amino-acid chain: Alpha-amylase 1 (625 aa).

The signal sequence occupies residues 1–22 (MGFSKIALFSLFALFGLPTSLA). The cysteines at positions 51 and 59 are disulfide-linked. Trp105 provides a ligand contact to substrate. A Ca(2+)-binding site is contributed by Asn143. Asn153, Asn163, and Asn180 each carry an N-linked (GlcNAc...) asparagine glycan. A disulfide bridge links Cys172 with Cys187. Ca(2+) is bound by residues Glu185 and Asp198. A substrate-binding site is contributed by Arg227. Residue Asp229 coordinates Ca(2+). Residue Asp229 is the Nucleophile of the active site. Residue 232–233 (KQ) coordinates substrate. N-linked (GlcNAc...) asparagine glycosylation occurs at Asn241. Glu253 is a Ca(2+) binding site. Glu253 (proton donor) is an active-site residue. N-linked (GlcNAc...) asparagine glycosylation is found at Asn260 and Asn286. Cys263 and Cys306 are disulfide-bonded. Asp322 serves as a coordination point for substrate. The N-linked (GlcNAc...) asparagine glycan is linked to Asn331. Substrate is bound at residue Arg370. Asn440 and Asn461 each carry an N-linked (GlcNAc...) asparagine glycan. Positions 526–579 (SATSSSKSSSSSSSRSGSSSSSSSRSGSTSSSGSSHTITSTSQSVHTSGSSTST) are disordered. A lipid anchor (GPI-anchor amidated serine) is attached at Ser603. Positions 604–625 (SANAVRVSILGVAAFIAIVLFI) are cleaved as a propeptide — removed in mature form.

Belongs to the glycosyl hydrolase 13 family. The cofactor is Ca(2+).

It is found in the cell membrane. It carries out the reaction Endohydrolysis of (1-&gt;4)-alpha-D-glucosidic linkages in polysaccharides containing three or more (1-&gt;4)-alpha-linked D-glucose units.. The chain is Alpha-amylase 1 (aah1) from Schizosaccharomyces pombe (strain 972 / ATCC 24843) (Fission yeast).